The sequence spans 166 residues: Thiamine precursor transporter HmpT (166 aa).

A run of 5 helical transmembrane segments spans residues 14 to 34, 35 to 55, 62 to 82, 105 to 125, and 126 to 146; these read LLAIWTALTFVLGRLFTFPIP, GSAGNILTLLDVGIYTAVFLF, IIGGFAAFLLDLTAGFSNYMF, FLLSLLVMVGGYFIVGGLMYG, and WGSAIAGLWVNIVQVIVGFVL.

In E.coli forms a stable energy-coupling factor (ECF) transporter complex composed of 2 membrane-embedded substrate-binding protein (S component), 2 ATP-binding proteins (A and A' components) and 2 transmembrane proteins (T component), probably with a stoichiometry of 2:1:1:2. May be able to interact with more than 1 S component at a time.

The protein resides in the cell membrane. In terms of biological role, probably a thiamine precursor-binding protein that interacts with the energy-coupling factor (ECF) ABC-transporter complex. Unlike classic ABC transporters this ECF transporter provides the energy necessary to transport a number of different substrates. The substrates themselves are bound by transmembrane, not extracytoplasmic soluble proteins. The polypeptide is Thiamine precursor transporter HmpT (hmpT) (Lactococcus lactis subsp. cremoris (strain MG1363)).